Reading from the N-terminus, the 20-residue chain is Cicerin (20 aa).

Residues 1 to 20 (ARCENFADSYRQPPISSSQT) are disordered.

Functionally, has antifungal activity against B.cinerea, F.oxysporum and M.arachidicola. Inhibits cell-free translation in rabbit reticulocyte lysate system. This chain is Cicerin, found in Cicer arietinum (Chickpea).